Here is a 322-residue protein sequence, read N- to C-terminus: DNA repair and recombination protein RadA (322 aa).

G105–T112 is a binding site for ATP.

Belongs to the eukaryotic RecA-like protein family.

Involved in DNA repair and in homologous recombination. Binds and assemble on single-stranded DNA to form a nucleoprotein filament. Hydrolyzes ATP in a ssDNA-dependent manner and promotes DNA strand exchange between homologous DNA molecules. The chain is DNA repair and recombination protein RadA from Methanococcus maripaludis (strain DSM 14266 / JCM 13030 / NBRC 101832 / S2 / LL).